The following is a 445-amino-acid chain: Mannan endo-1,4-beta-mannosidase 2 (445 aa).

Positions 1-27 are cleaved as a signal peptide; it reads MAVGNGLILYHILGLASCIALVYFSLG. Tryptophan 110 provides a ligand contact to substrate. Asparagine 181 carries N-linked (GlcNAc...) asparagine glycosylation. Asparagine 226 contacts substrate. Residue glutamate 227 is the Proton donor of the active site. Tyrosine 309 serves as a coordination point for substrate. Residue glutamate 349 is the Nucleophile of the active site. Residue tryptophan 391 participates in substrate binding.

It belongs to the glycosyl hydrolase 5 (cellulase A) family. In terms of tissue distribution, expressed in stems and seeds, and at lower levels in roots and leaves.

Its subcellular location is the secreted. The catalysed reaction is Random hydrolysis of (1-&gt;4)-beta-D-mannosidic linkages in mannans, galactomannans and glucomannans.. This is Mannan endo-1,4-beta-mannosidase 2 (MAN2) from Oryza sativa subsp. japonica (Rice).